The primary structure comprises 377 residues: tRNA-queuosine alpha-mannosyltransferase (377 aa).

It belongs to the glycosyltransferase group 1 family. Glycosyltransferase 4 subfamily.

The enzyme catalyses queuosine(34) in tRNA(Asp) + GDP-alpha-D-mannose = O-4''-alpha-D-mannosylqueuosine(34) in tRNA(Asp) + GDP + H(+). In terms of biological role, glycosyltransferase that specifically catalyzes mannosylation of cytoplasmic tRNA(Asp) modified with queuosine at position 34 (queuosine(34)). Mannosylates the cyclopentene moiety of queuosine(34) in tRNA(Asp) to form mannosyl-queuosine(34). The protein is tRNA-queuosine alpha-mannosyltransferase of Drosophila melanogaster (Fruit fly).